The following is a 214-amino-acid chain: Small ribosomal subunit protein uS3c (214 aa).

In terms of domain architecture, KH type-2 spans 39–111 (IRTYIHTISK…QLTINVLEVE (73 aa)).

The protein belongs to the universal ribosomal protein uS3 family. In terms of assembly, part of the 30S ribosomal subunit.

It is found in the plastid. Its subcellular location is the chloroplast. The polypeptide is Small ribosomal subunit protein uS3c (rps3) (Phaeodactylum tricornutum (strain CCAP 1055/1)).